Here is a 169-residue protein sequence, read N- to C-terminus: Protein Flattop homolog (169 aa).

Residues 53-169 (IPRSSRSPWG…SPKLATPEPC (117 aa)) form a disordered region. Over residues 119-130 (VQASPRNASPLQ) the composition is skewed to polar residues.

This sequence belongs to the Flattop family.

Its subcellular location is the cytoplasm. It localises to the cytoskeleton. The protein localises to the cilium basal body. The protein resides in the cell projection. It is found in the cilium. Its subcellular location is the apical cell membrane. Acts as a regulator of cilium basal body docking and positioning in mono- and multiciliated cells. This Nematostella vectensis (Starlet sea anemone) protein is Protein Flattop homolog.